The primary structure comprises 245 residues: 1-(5-phosphoribosyl)-5-[(5-phosphoribosylamino)methylideneamino] imidazole-4-carboxamide isomerase (245 aa).

D8 functions as the Proton acceptor in the catalytic mechanism. D130 acts as the Proton donor in catalysis.

This sequence belongs to the HisA/HisF family.

The protein localises to the cytoplasm. It carries out the reaction 1-(5-phospho-beta-D-ribosyl)-5-[(5-phospho-beta-D-ribosylamino)methylideneamino]imidazole-4-carboxamide = 5-[(5-phospho-1-deoxy-D-ribulos-1-ylimino)methylamino]-1-(5-phospho-beta-D-ribosyl)imidazole-4-carboxamide. It functions in the pathway amino-acid biosynthesis; L-histidine biosynthesis; L-histidine from 5-phospho-alpha-D-ribose 1-diphosphate: step 4/9. The polypeptide is 1-(5-phosphoribosyl)-5-[(5-phosphoribosylamino)methylideneamino] imidazole-4-carboxamide isomerase (Pseudomonas putida (strain GB-1)).